Reading from the N-terminus, the 344-residue chain is Tetraacyldisaccharide 4'-kinase (344 aa).

Position 65-72 (His-65–Thr-72) interacts with ATP.

The protein belongs to the LpxK family.

The catalysed reaction is a lipid A disaccharide + ATP = a lipid IVA + ADP + H(+). Its pathway is glycolipid biosynthesis; lipid IV(A) biosynthesis; lipid IV(A) from (3R)-3-hydroxytetradecanoyl-[acyl-carrier-protein] and UDP-N-acetyl-alpha-D-glucosamine: step 6/6. Its function is as follows. Transfers the gamma-phosphate of ATP to the 4'-position of a tetraacyldisaccharide 1-phosphate intermediate (termed DS-1-P) to form tetraacyldisaccharide 1,4'-bis-phosphate (lipid IVA). This Neisseria meningitidis serogroup A / serotype 4A (strain DSM 15465 / Z2491) protein is Tetraacyldisaccharide 4'-kinase.